The sequence spans 341 residues: Anthranilate phosphoribosyltransferase (341 aa).

5-phospho-alpha-D-ribose 1-diphosphate contacts are provided by residues G79, 82–83 (GD), T87, 89–92 (NIST), 107–115 (KHGNRAVSS), and S119. G79 contributes to the anthranilate binding site. Residue S91 coordinates Mg(2+). N110 is an anthranilate binding site. An anthranilate-binding site is contributed by R165. Mg(2+) is bound by residues D224 and E225.

This sequence belongs to the anthranilate phosphoribosyltransferase family. Homodimer. The cofactor is Mg(2+).

The catalysed reaction is N-(5-phospho-beta-D-ribosyl)anthranilate + diphosphate = 5-phospho-alpha-D-ribose 1-diphosphate + anthranilate. Its pathway is amino-acid biosynthesis; L-tryptophan biosynthesis; L-tryptophan from chorismate: step 2/5. Catalyzes the transfer of the phosphoribosyl group of 5-phosphorylribose-1-pyrophosphate (PRPP) to anthranilate to yield N-(5'-phosphoribosyl)-anthranilate (PRA). This Bacillus cereus (strain ZK / E33L) protein is Anthranilate phosphoribosyltransferase.